The following is a 352-amino-acid chain: NADH-ubiquinone oxidoreductase chain 2 (352 aa).

Transmembrane regions (helical) follow at residues 4 to 24 (MISIFLFLTVVSGTIIVVSAE), 26 to 46 (WFVIWLGLELSTLALIPILWF), 60 to 80 (FLVQAFSAALLLNSALIQAWF), 96 to 116 (LCLSVALAFNLGLAACHFWLP), 124 to 144 (FIQGLIIATWQKIAPLFLLFY), 150 to 170 (FSYFIILAALISILVGGWGGL), 178 to 198 (ILAFSSIGNMGWIVVTSAFSL), 205 to 225 (LFIYLVINTSIFLILDFLSIF), 241 to 261 (ITLVILTILSLGGLPPLTGFI), 274 to 294 (GFIFFSSVMIIGSLLSLFFYL), and 330 to 350 (LVSSFSVLSILAIPLTIPLYI).

It belongs to the complex I subunit 2 family.

The protein localises to the mitochondrion inner membrane. It catalyses the reaction a ubiquinone + NADH + 5 H(+)(in) = a ubiquinol + NAD(+) + 4 H(+)(out). In terms of biological role, core subunit of the mitochondrial membrane respiratory chain NADH dehydrogenase (Complex I) that is believed to belong to the minimal assembly required for catalysis. Complex I functions in the transfer of electrons from NADH to the respiratory chain. The immediate electron acceptor for the enzyme is believed to be ubiquinone. This chain is NADH-ubiquinone oxidoreductase chain 2 (ND2), found in Paracentrotus lividus (Common sea urchin).